A 272-amino-acid polypeptide reads, in one-letter code: Acetylglutamate kinase (272 aa).

Residues 46–47 (GA), R68, and N166 contribute to the substrate site.

It belongs to the acetylglutamate kinase family. ArgB subfamily.

The protein resides in the cytoplasm. It carries out the reaction N-acetyl-L-glutamate + ATP = N-acetyl-L-glutamyl 5-phosphate + ADP. It participates in amino-acid biosynthesis; L-arginine biosynthesis; N(2)-acetyl-L-ornithine from L-glutamate: step 2/4. Catalyzes the ATP-dependent phosphorylation of N-acetyl-L-glutamate. The protein is Acetylglutamate kinase of Dehalococcoides mccartyi (strain ATCC BAA-2266 / KCTC 15142 / 195) (Dehalococcoides ethenogenes (strain 195)).